The following is a 227-amino-acid chain: ATP-dependent dethiobiotin synthetase BioD (227 aa).

An ATP-binding site is contributed by 13–18; that stretch reads DVGKTV. A Mg(2+)-binding site is contributed by T17. K38 is a catalytic residue. ATP is bound by residues D55, 116–119, 176–177, and 205–207; these read EGAG, NR, and PYI. 2 residues coordinate Mg(2+): D55 and E116.

This sequence belongs to the dethiobiotin synthetase family. In terms of assembly, homodimer. It depends on Mg(2+) as a cofactor.

The protein resides in the cytoplasm. The enzyme catalyses (7R,8S)-7,8-diammoniononanoate + CO2 + ATP = (4R,5S)-dethiobiotin + ADP + phosphate + 3 H(+). The protein operates within cofactor biosynthesis; biotin biosynthesis; biotin from 7,8-diaminononanoate: step 1/2. Its function is as follows. Catalyzes a mechanistically unusual reaction, the ATP-dependent insertion of CO2 between the N7 and N8 nitrogen atoms of 7,8-diaminopelargonic acid (DAPA, also called 7,8-diammoniononanoate) to form a ureido ring. The sequence is that of ATP-dependent dethiobiotin synthetase BioD from Vibrio campbellii (strain ATCC BAA-1116).